We begin with the raw amino-acid sequence, 696 residues long: SEC14 domain and spectrin repeat-containing protein 1 (696 aa).

Positions 1-153 (MEASVILPIL…DFGGSLTYDH (153 aa)) constitute a CRAL-TRIO domain. Spectrin repeat units follow at residues 275–378 (EEIQ…NLLQ), 381–494 (LEFH…LKML), and 500–602 (FKCE…HRLE).

The protein belongs to the SOLO family. In terms of assembly, interacts (via the spectrin 1 repeat) with TRPC4 and TRPC5 (via CIRB domain). Interacts with CTNNB1.

Its function is as follows. May act as the primary docking protein directing membrane turnover and assembly of the transient receptor potential channels TRPC4 and TRPC5. Binds phospholipids such as phosphatidylinositol monophosphates, phosphatidylinositol diphosphates (PIP2s) and phosphatidic acid, but not less polar lipids including phosphatidylcholine, phosphatidylserine, and phosphatidylinositol. The binding to PIP2s is calcium dependent. Might be involved in the plasma membrane localization of CTNNB1. In Mus musculus (Mouse), this protein is SEC14 domain and spectrin repeat-containing protein 1 (Sestd1).